The sequence spans 238 residues: Proenkephalin-A (238 aa).

Positions 1–25 (MAASALSTCLWMLVLGTCVSLVVGT) are cleaved as a signal peptide. Cystine bridges form between Cys-27/Cys-50, Cys-31/Cys-54, and Cys-34/Cys-66. The tract at residues 76–103 (QSPLASQQDQERVDAMMADEEDATSPEH) is disordered. Propeptides lie at residues 124-167 (SSAS…AEAV), 177-195 (ADRG…GRVL), and 206-230 (VGRP…SELQ).

The protein belongs to the opioid neuropeptide precursor family. As to expression, expressed by the venom gland. Moderately expressed in the venom gland transcriptome.

It is found in the secreted. In terms of biological role, met-enkephalins compete with and mimic the effects of opiate drugs. They play a role in a number of physiologic functions, including pain perception and responses to stress. Enkephalin peptides found in Meiacanthus fangblennies induce physiological effects via their interaction with delta-type opioid receptors (OPRD1) (tested on M.grammistes). Therefore, finding a proenkephalin sequence in M.atrodorsalis venom suggests that this protein act in the same manner. The protein is Proenkephalin-A of Meiacanthus atrodorsalis (Forktail blenny).